The sequence spans 345 residues: Biotin synthase (345 aa).

The Radical SAM core domain occupies 66–291; sequence PEVEVEGIIS…RTMLRFAGGR (226 aa). [4Fe-4S] cluster is bound by residues cysteine 81, cysteine 85, and cysteine 88. 4 residues coordinate [2Fe-2S] cluster: cysteine 124, cysteine 157, cysteine 216, and arginine 286.

This sequence belongs to the radical SAM superfamily. Biotin synthase family. As to quaternary structure, homodimer. It depends on [4Fe-4S] cluster as a cofactor. [2Fe-2S] cluster is required as a cofactor.

The catalysed reaction is (4R,5S)-dethiobiotin + (sulfur carrier)-SH + 2 reduced [2Fe-2S]-[ferredoxin] + 2 S-adenosyl-L-methionine = (sulfur carrier)-H + biotin + 2 5'-deoxyadenosine + 2 L-methionine + 2 oxidized [2Fe-2S]-[ferredoxin]. It participates in cofactor biosynthesis; biotin biosynthesis; biotin from 7,8-diaminononanoate: step 2/2. Catalyzes the conversion of dethiobiotin (DTB) to biotin by the insertion of a sulfur atom into dethiobiotin via a radical-based mechanism. In Mycobacterium avium (strain 104), this protein is Biotin synthase.